The sequence spans 572 residues: Arginine--tRNA ligase (572 aa).

A 'HIGH' region motif is present at residues Pro122–His132.

The protein belongs to the class-I aminoacyl-tRNA synthetase family. Monomer.

It is found in the cytoplasm. The catalysed reaction is tRNA(Arg) + L-arginine + ATP = L-arginyl-tRNA(Arg) + AMP + diphosphate. The polypeptide is Arginine--tRNA ligase (Neisseria gonorrhoeae (strain NCCP11945)).